Reading from the N-terminus, the 180-residue chain is MRILGIDPGLRVTGFGVIDVSGHRLAYVASGVIKTPTADLPTRLGTIYDGVSTLIREHTPDQAAIEKVFVNVNPQSTLLLGQARGAAICGLVSGGLPVAEYTALQLKQAVVGYGRATKEQMQEMVARLLSLSGLPGTDAADALGMAICHAHGGNTLNTLGGIAPALAKKGLRVRRGRLVG.

Residues Asp-7, Glu-66, and Asp-138 contribute to the active site. Asp-7, Glu-66, and Asp-138 together coordinate Mg(2+).

This sequence belongs to the RuvC family. As to quaternary structure, homodimer which binds Holliday junction (HJ) DNA. The HJ becomes 2-fold symmetrical on binding to RuvC with unstacked arms; it has a different conformation from HJ DNA in complex with RuvA. In the full resolvosome a probable DNA-RuvA(4)-RuvB(12)-RuvC(2) complex forms which resolves the HJ. The cofactor is Mg(2+).

It is found in the cytoplasm. The catalysed reaction is Endonucleolytic cleavage at a junction such as a reciprocal single-stranded crossover between two homologous DNA duplexes (Holliday junction).. In terms of biological role, the RuvA-RuvB-RuvC complex processes Holliday junction (HJ) DNA during genetic recombination and DNA repair. Endonuclease that resolves HJ intermediates. Cleaves cruciform DNA by making single-stranded nicks across the HJ at symmetrical positions within the homologous arms, yielding a 5'-phosphate and a 3'-hydroxyl group; requires a central core of homology in the junction. The consensus cleavage sequence is 5'-(A/T)TT(C/G)-3'. Cleavage occurs on the 3'-side of the TT dinucleotide at the point of strand exchange. HJ branch migration catalyzed by RuvA-RuvB allows RuvC to scan DNA until it finds its consensus sequence, where it cleaves and resolves the cruciform DNA. This is Crossover junction endodeoxyribonuclease RuvC from Burkholderia thailandensis (strain ATCC 700388 / DSM 13276 / CCUG 48851 / CIP 106301 / E264).